The following is a 200-amino-acid chain: Gamma-glutamyl-CDP-amidate hydrolase (200 aa).

In terms of domain architecture, Glutamine amidotransferase type-1 spans 20 to 200; sequence ECLALDWGKL…LKEWFSLIKE (181 aa). Residue Cys101 is the Nucleophile of the active site. Residues His178 and Glu180 contribute to the active site.

It catalyses the reaction N(5)-(cytidine 5'-diphosphoramidyl)-L-glutamine + H2O = cytidine 5'-diphosphoramidate + L-glutamate + H(+). It participates in capsule biogenesis; capsule polysaccharide biosynthesis. Its function is as follows. Involved in the biosynthesis of the O-methyl phosphoramidate (MeOPN) group found on the capsular polysaccharide (CPS) of C.jejuni. Catalyzes the hydrolysis of CDP-L-glutamine to L-glutamate and cytidine diphosphoramidate. The polypeptide is Gamma-glutamyl-CDP-amidate hydrolase (Campylobacter jejuni subsp. jejuni serotype O:2 (strain ATCC 700819 / NCTC 11168)).